The primary structure comprises 228 residues: uncharacterized protein (228 aa).

Transmembrane regions (helical) follow at residues 14–34 (HTIS…MLLA), 42–62 (VALF…AITL), 130–150 (FMFS…LVGS), 156–176 (FSFD…VLFM), and 192–212 (IAIA…LIAL).

Belongs to the AzlC family.

The protein resides in the cell membrane. This is an uncharacterized protein from Helicobacter pylori (strain J99 / ATCC 700824) (Campylobacter pylori J99).